The chain runs to 1033 residues: Kinesin-like protein KIN-4A (1033 aa).

The 356-residue stretch at 11 to 366 folds into the Kinesin motor domain; that stretch reads CVKVAVHVRP…LKYANRARNI (356 aa). 89 to 96 lines the ATP pocket; that stretch reads GQTGSGKT. Residues 443-462 form a disordered region; it reads QDGSPCSVESDGLKRNLRSR. Residues 453 to 462 are compositionally biased toward basic and acidic residues; sequence DGLKRNLRSR. Residues 525–638 are a coiled coil; that stretch reads ALKQHFGKKI…IKQEAEQFRQ (114 aa). The interval 763-785 is disordered; sequence DELDSKGPSPSRGKNGCARGSSL. Positions 863-895 form a coiled coil; that stretch reads IEIREMKEQLKELVGLLRQSELQRKEVENELKL.

It belongs to the TRAFAC class myosin-kinesin ATPase superfamily. Kinesin family. KIN-4 subfamily. As to quaternary structure, homodimer. Expressed in cotton fibers.

It is found in the cytoplasm. Kinesin-like motor protein involved in the control of the oriented deposition of cellulose microfibrils. In Gossypium hirsutum (Upland cotton), this protein is Kinesin-like protein KIN-4A.